The sequence spans 671 residues: MVNVMNTLSFASLSFNSNNTPVSEQFDDIYFSTQDGLEESYYVFQDGNQLWQKWQTHDVESFVIAETGFGTGLNFLAVADKFQQFLSEFPNSKLKRLYFISFEKFPLTSEQLATIHKNYPQFATLSQKMTACWQPRQTGCQRYHFEQIYLDVWFGDMLDNLPQLGDLYTNRIDAWFLDGFSPDKNPEMWNETLYRQMFSLTKNGGSFATFTAASTVRKGLQAVGFEVKKRKGFGKKREMLWGEKPQQSETAPVNYPYFYSESQTEANDIAVVGGGVASLFVVLSLLEKGKKVTLYCKDNALAQNASGNLQGAIYPQLSDDDERNIRFYVHCFDYALQRLAQIEPLVNFEHALTGVALYAYNDKTAKKLEKIARQTNDDSLFKLCSAAELSEKIGLKVPNGGAFMPQSGWLSPIQFVQGTFAYLQTKGLRIVLNHEVKDPQFSEGKWHWQHNGKTFSHQILVLANGHTLTQFQQAQGIPLYPVRGQVSQIPTTSALQQLKCVVCYDGYLTPVSKANTHCIGASHVRDNAETHFSLEEHHENVAKLQQNLTACDWTQGIDESQNLAKQGVRAALRDRVPMVGQMPNFSVQKVQYQNLYNQLRRKQAVENAANFANLYMVNGLASRGLTTAPLLGEMLASLICDEPLPISEDIWHVLSPNRTWIRKLLKGSKVE.

The segment at 1 to 245 (MVNVMNTLSF…KREMLWGEKP (245 aa)) is tRNA (mnm(5)s(2)U34)-methyltransferase. The interval 272–671 (VGGGVASLFV…RKLLKGSKVE (400 aa)) is FAD-dependent cmnm(5)s(2)U34 oxidoreductase.

The protein in the N-terminal section; belongs to the methyltransferase superfamily. tRNA (mnm(5)s(2)U34)-methyltransferase family. This sequence in the C-terminal section; belongs to the DAO family. It depends on FAD as a cofactor.

It is found in the cytoplasm. It carries out the reaction 5-aminomethyl-2-thiouridine(34) in tRNA + S-adenosyl-L-methionine = 5-methylaminomethyl-2-thiouridine(34) in tRNA + S-adenosyl-L-homocysteine + H(+). Its function is as follows. Catalyzes the last two steps in the biosynthesis of 5-methylaminomethyl-2-thiouridine (mnm(5)s(2)U) at the wobble position (U34) in tRNA. Catalyzes the FAD-dependent demodification of cmnm(5)s(2)U34 to nm(5)s(2)U34, followed by the transfer of a methyl group from S-adenosyl-L-methionine to nm(5)s(2)U34, to form mnm(5)s(2)U34. This Actinobacillus pleuropneumoniae serotype 5b (strain L20) protein is tRNA 5-methylaminomethyl-2-thiouridine biosynthesis bifunctional protein MnmC.